A 347-amino-acid chain; its full sequence is MAIDEDKQKAISLAIKQIDKVFGKGALVRLGDKQVEKIDSISTGSLGLDLALGIGGVPKGRIIEIYGPESSGKTTLSLHIIAECQKNGGVCAFIDAEHALDVHYAKRLGVDTENLLVSQPDTGEQALEILETITRSGGIDLVVVDSVAALTPKAEIDGDMGDQHVGLQARLMSHALRKITGVLHKMNTTLIFINQIRMKIGMMGYGSPETTTGGNALKFYASVRIDIRRIAALKQNEQHIGNRAKVKVVKNKVAPPFREAEFDIMFGEGISKEGEIIDYGVKLDIVDKSGAWLSYQDKKLGQGRENAKALLKEDKALANEIILKIKESIGSNEEIMPLPDEPLEEME.

An ATP-binding site is contributed by 67–74; the sequence is GPESSGKT.

It belongs to the RecA family.

It localises to the cytoplasm. Its function is as follows. Can catalyze the hydrolysis of ATP in the presence of single-stranded DNA, the ATP-dependent uptake of single-stranded DNA by duplex DNA, and the ATP-dependent hybridization of homologous single-stranded DNAs. It interacts with LexA causing its activation and leading to its autocatalytic cleavage. The sequence is that of Protein RecA from Helicobacter acinonychis (strain Sheeba).